We begin with the raw amino-acid sequence, 343 residues long: Probable fructokinase-7 (343 aa).

Gly-2 is modified (N-acetylglycine).

It belongs to the carbohydrate kinase PfkB family.

It catalyses the reaction D-fructose + ATP = D-fructose 6-phosphate + ADP + H(+). It functions in the pathway glycan biosynthesis; starch biosynthesis. In terms of biological role, may play an important role in maintaining the flux of carbon towards starch formation. This Arabidopsis thaliana (Mouse-ear cress) protein is Probable fructokinase-7.